Consider the following 425-residue polypeptide: MEIRNVKGTKDYLPEEQVLRSKIKRACEDTFERYGCKPLETPTLNMYELMSYKYGGGDEILKEIYTLQDQGKRDLALRYDLTIPFAKVVAMNPNIRLPFKRYEIGKVFRDGPIKQGRFREFIQCDVDIVGVESVMAEAELMSMAFELFQTLNLEVTIQYNNRKLLNGILQAINIPTELTSDVILSLDKIEKIGIDGVRKDVLERGISEEMADTICNTVLSCLQLSIADFKEAFNNPLVADGVNELQQLQQYLIALGINENTIFNPFLARGLTMYTGTVYEIFLKDGSITSSIGSGGRYDNIIGAFRGDDMSYPTVGISFGLDVIYTALSQKETISSTADVFIIPLGTELQCLQIAQQLRSTTSLKIELELAGRKLKRALNYANKENIPYVLIIGEEEICTETVMLRNMKEGSEVKVPLSSLSNYL.

It belongs to the class-II aminoacyl-tRNA synthetase family. In terms of assembly, homodimer.

It localises to the cytoplasm. The enzyme catalyses tRNA(His) + L-histidine + ATP = L-histidyl-tRNA(His) + AMP + diphosphate + H(+). The chain is Histidine--tRNA ligase 1 from Bacillus anthracis.